Reading from the N-terminus, the 214-residue chain is Large ribosomal subunit protein uL16 (214 aa).

R32 bears the Citrulline mark. K175 participates in a covalent cross-link: Glycyl lysine isopeptide (Lys-Gly) (interchain with G-Cter in SUMO2). K188 is covalently cross-linked (Glycyl lysine isopeptide (Lys-Gly) (interchain with G-Cter in ubiquitin)).

It belongs to the universal ribosomal protein uL16 family. As to quaternary structure, component of the large ribosomal subunit. Mature ribosomes consist of a small (40S) and a large (60S) subunit. The 40S subunit contains about 33 different proteins and 1 molecule of RNA (18S). The 60S subunit contains about 49 different proteins and 3 molecules of RNA (28S, 5.8S and 5S). Post-translationally, citrullinated by PADI4. Ufmylated by UFL1.

It is found in the cytoplasm. Component of the large ribosomal subunit. Plays a role in the formation of actively translating ribosomes. May play a role in the embryonic brain development. The protein is Large ribosomal subunit protein uL16 (RPL10) of Oryctolagus cuniculus (Rabbit).